Reading from the N-terminus, the 270-residue chain is Fibroblast growth factor 5 (270 aa).

The first 20 residues, 1 to 20 (MSLSFLLLLFLSHLILSAWA), serve as a signal peptide directing secretion. Residues 26 to 83 (LAPKGQPGPAATGRNPAGASSSRSSRGTTSSSSSSVSSSHSASLGNQGSGLEQSSFQW) are disordered. The span at 43-68 (GASSSRSSRGTTSSSSSSVSSSHSAS) shows a compositional bias: low complexity. The segment covering 69–83 (LGNQGSGLEQSSFQW) has biased composition (polar residues). Asn-112 is a glycosylation site (N-linked (GlcNAc...) asparagine). Residues 236–257 (PEKKKPPSPVKPKVPLSAPRKS) form a disordered region.

Belongs to the heparin-binding growth factors family. In terms of assembly, interacts with FGFR1 and FGFR2. Affinity between fibroblast growth factors (FGFs) and their receptors is increased by heparan sulfate glycosaminoglycans that function as coreceptors. Expressed in skin.

Its subcellular location is the secreted. Its function is as follows. Plays an important role in the regulation of cell proliferation and cell differentiation. Required for normal regulation of the hair growth cycle. Functions as an inhibitor of hair elongation by promoting progression from anagen, the growth phase of the hair follicle, into catagen the apoptosis-induced regression phase. The chain is Fibroblast growth factor 5 (FGF5) from Felis catus (Cat).